Reading from the N-terminus, the 67-residue chain is Large ribosomal subunit protein uL29 (67 aa).

Belongs to the universal ribosomal protein uL29 family.

The chain is Large ribosomal subunit protein uL29 from Sphingopyxis alaskensis (strain DSM 13593 / LMG 18877 / RB2256) (Sphingomonas alaskensis).